Consider the following 234-residue polypeptide: Large ribosomal subunit protein uL1 (234 aa).

The protein belongs to the universal ribosomal protein uL1 family. In terms of assembly, part of the 50S ribosomal subunit.

Functionally, binds directly to 23S rRNA. The L1 stalk is quite mobile in the ribosome, and is involved in E site tRNA release. Its function is as follows. Protein L1 is also a translational repressor protein, it controls the translation of the L11 operon by binding to its mRNA. The chain is Large ribosomal subunit protein uL1 from Pectobacterium carotovorum subsp. carotovorum (strain PC1).